The following is a 343-amino-acid chain: D-alanine--D-alanine ligase (343 aa).

The region spanning 129–335 is the ATP-grasp domain; sequence KYVLENFGVK…YGELISEIIE (207 aa). 162–217 lines the ATP pocket; it reads ENKLGYDVFIKPSNSGSSVGISKAHNREELEAGLEEALKFDRKVLVEVALNAREIE. The Mg(2+) site is built by Asp288, Glu302, and Asn304.

Belongs to the D-alanine--D-alanine ligase family. Mg(2+) serves as cofactor. Mn(2+) is required as a cofactor.

The protein resides in the cytoplasm. It carries out the reaction 2 D-alanine + ATP = D-alanyl-D-alanine + ADP + phosphate + H(+). Its pathway is cell wall biogenesis; peptidoglycan biosynthesis. Its function is as follows. Cell wall formation. The polypeptide is D-alanine--D-alanine ligase (Clostridium novyi (strain NT)).